A 218-amino-acid chain; its full sequence is Protein-methionine-sulfoxide reductase heme-binding subunit MsrQ (218 aa).

5 helical membrane-spanning segments follow: residues 14–34 (AVHA…WQVW), 60–80 (LLLI…AVLI), 86–106 (LGLY…WLDL), 121–141 (PYIT…ITST), and 155–175 (LHML…WLVK).

The protein belongs to the MsrQ family. As to quaternary structure, heterodimer of a catalytic subunit (MsrP) and a heme-binding subunit (MsrQ). The cofactor is FMN. Requires heme b as cofactor.

The protein resides in the cell inner membrane. Part of the MsrPQ system that repairs oxidized periplasmic proteins containing methionine sulfoxide residues (Met-O), using respiratory chain electrons. Thus protects these proteins from oxidative-stress damage caused by reactive species of oxygen and chlorine generated by the host defense mechanisms. MsrPQ is essential for the maintenance of envelope integrity under bleach stress, rescuing a wide series of structurally unrelated periplasmic proteins from methionine oxidation. MsrQ provides electrons for reduction to the reductase catalytic subunit MsrP, using the quinone pool of the respiratory chain. The chain is Protein-methionine-sulfoxide reductase heme-binding subunit MsrQ from Xanthomonas campestris pv. campestris (strain 8004).